Here is a 312-residue protein sequence, read N- to C-terminus: Mycothiol acetyltransferase (312 aa).

N-acetyltransferase domains lie at 8-136 (PIIR…LPMP) and 149-301 (LRLD…HQDH). Position 38 (E38) interacts with 1D-myo-inositol 2-(L-cysteinylamino)-2-deoxy-alpha-D-glucopyranoside. Residues 77–79 (LMV) and 85–90 (RQGIAT) contribute to the acetyl-CoA site. 1D-myo-inositol 2-(L-cysteinylamino)-2-deoxy-alpha-D-glucopyranoside contacts are provided by E175, K215, and E226. Acetyl-CoA-binding positions include 230–232 (LGV) and 237–243 (EGKGVGR). Residue Y264 coordinates 1D-myo-inositol 2-(L-cysteinylamino)-2-deoxy-alpha-D-glucopyranoside. 269–274 (NERVVH) serves as a coordination point for acetyl-CoA. Residues 292–312 (PAKPARHQDHGRQSSPQERDA) form a disordered region. Residues 297–312 (RHQDHGRQSSPQERDA) show a composition bias toward basic and acidic residues.

It belongs to the acetyltransferase family. MshD subfamily. Monomer.

It catalyses the reaction 1D-myo-inositol 2-(L-cysteinylamino)-2-deoxy-alpha-D-glucopyranoside + acetyl-CoA = mycothiol + CoA + H(+). Functionally, catalyzes the transfer of acetyl from acetyl-CoA to desacetylmycothiol (Cys-GlcN-Ins) to form mycothiol. The chain is Mycothiol acetyltransferase from Propionibacterium freudenreichii subsp. shermanii (strain ATCC 9614 / DSM 4902 / CIP 103027 / NCIMB 8099 / CIRM-BIA1).